Reading from the N-terminus, the 234-residue chain is uncharacterized protein (234 aa).

4 consecutive transmembrane segments (helical) span residues 22 to 42, 59 to 79, 154 to 174, and 186 to 206; these read TFLNTLIYCILLVIYEYIPLI, INWALSFGILPCAFAIFAYLI, FWIFFEFSIIALISFLIIFFC, and LLSLFFFVILSFSVSGIIFAL.

It is found in the cell membrane. This is an uncharacterized protein from Escherichia coli (strain K12).